Consider the following 331-residue polypeptide: RNA/RNP complex-1-interacting phosphatase (331 aa).

The Tyrosine-protein phosphatase domain maps to 61–208 (FEKHLAPEEC…LRNGPIRKNW (148 aa)). Cysteine 152 acts as the Phosphocysteine intermediate in catalysis. Substrate is bound at residue 153–158 (THGVNR). Arginine 158 (proton donor/acceptor) is an active-site residue.

This sequence belongs to the protein-tyrosine phosphatase family. Non-receptor class dual specificity subfamily. In terms of assembly, monomer. May interact with SFRS7 and SFRS9/SRP30C.

It localises to the nucleus. The protein resides in the nucleus speckle. In terms of biological role, possesses RNA 5'-triphosphatase and diphosphatase activities, but displays a poor protein-tyrosine phosphatase activity. In addition, has phosphatase activity with ATP, ADP and O-methylfluorescein phosphate (in vitro). Binds to RNA. May participate in nuclear mRNA metabolism. This chain is RNA/RNP complex-1-interacting phosphatase (DUSP11), found in Bos taurus (Bovine).